A 555-amino-acid polypeptide reads, in one-letter code: MAETEHRPTNFIRQIIDKDLSNGLHDAIKTRFPPEPNGFLHIGHAKSICLNFGIAEDYTGSCNLRFDDTNPAKEDITFVNSIKEDVTWLGFTWDGEARYSSNYFDQLHAYAVELIEKGLAYVDFSAQDVMREMRGTLKEPGQNSPYRDTDVETNLKEFAKMTAGDYKEGECSLRAKIDMTSPFMCMRDPVIYRVKHAHHHQTGDKWCVYPMYDFTHCISDAIEGITHSLCTLEFQDNRRLYDWVIENISIDCTPRQYEFSRLNLEYTVLSKRRLIQLVEENHVSGWDDPRMPTIAGLRRRGYTPGSIVEFCKRIGVTKMDNMVEMSMLEACIRDDLNANAPRAMAVLDPIKLVIENYEEGKTETLVAPNHPNDESMGTRNIGFSREVYIEAEDFRESANKKFKRLVLEKEVRLRNAYVVKANRVEKDEEGNVTTVYCTYDPDTLGKDPADGRKVKGVIHWVDAATAQAAEFRLYDRLFNVPNPAAEENFTDAINPESLEVKQGWAEAGLIGHVPEVGAWQFERTGYFCVDKDSTDAKPVFNRTVGLRDTWAKIGE.

A 'HIGH' region motif is present at residues 34–44; the sequence is PEPNGFLHIGH. ATP-binding positions include 35–37 and 41–47; these read EPN and HIGHAKS. Residues Asp-67 and Tyr-212 each coordinate L-glutamine. ATP is bound by residues Thr-231, 261-262, and 269-271; these read RL and LSK. Residues 268 to 272 carry the 'KMSKS' region motif; that stretch reads VLSKR.

It belongs to the class-I aminoacyl-tRNA synthetase family. In terms of assembly, monomer.

It localises to the cytoplasm. It catalyses the reaction tRNA(Gln) + L-glutamine + ATP = L-glutaminyl-tRNA(Gln) + AMP + diphosphate. This is Glutamine--tRNA ligase from Alteromonas mediterranea (strain DSM 17117 / CIP 110805 / LMG 28347 / Deep ecotype).